Here is a 445-residue protein sequence, read N- to C-terminus: Trimethylamine monooxygenase (445 aa).

The FAD site is built by Ser-14, Glu-39, Gln-41, Leu-47, Trp-48, and His-64. NADP(+)-binding residues include Trp-72 and Asn-74. Positions 74 and 127 each coordinate FAD. Residues Thr-204, Ser-205, Ser-207, and Arg-228 each coordinate NADP(+). FAD contacts are provided by Gln-317 and Thr-320. Position 411 (Arg-411) interacts with NADP(+).

This sequence belongs to the FMO family. The cofactor is FAD.

It carries out the reaction trimethylamine + NADPH + O2 = trimethylamine N-oxide + NADP(+) + H2O. Functionally, catalyzes the oxidation of trimethylamine (TMA) to produce trimethylamine N-oxide (TMAO). In vitro, has a broad substrate specificity, oxidizing many nitrogen- and sulfur-containing compounds, including dimethylamine (DMA), dimethylsulfide (DMS) and dimethylsulfoxide (DMSO). This Roseovarius sp. (strain 217) protein is Trimethylamine monooxygenase.